Consider the following 441-residue polypeptide: Queuine tRNA-ribosyltransferase accessory subunit 2 (441 aa).

Zn(2+) contacts are provided by C307, C309, C312, and H338.

The protein belongs to the queuine tRNA-ribosyltransferase family. QTRT2 subfamily. As to quaternary structure, heterodimer of a catalytic subunit and an accessory subunit. Requires Zn(2+) as cofactor.

It localises to the cytoplasm. In terms of biological role, non-catalytic subunit of the queuine tRNA-ribosyltransferase (TGT) that catalyzes the base-exchange of a guanine (G) residue with queuine (Q) at position 34 (anticodon wobble position) in tRNAs with GU(N) anticodons (tRNA-Asp, -Asn, -His and -Tyr), resulting in the hypermodified nucleoside queuosine (7-(((4,5-cis-dihydroxy-2-cyclopenten-1-yl)amino)methyl)-7-deazaguanosine). This chain is Queuine tRNA-ribosyltransferase accessory subunit 2 (qtr2), found in Schizosaccharomyces pombe (strain 972 / ATCC 24843) (Fission yeast).